A 352-amino-acid chain; its full sequence is Lipoyl synthase (352 aa).

A disordered region spans residues M1 to A21. [4Fe-4S] cluster-binding residues include C71, C76, C82, C97, C101, C104, and S308. Residues W83–A297 form the Radical SAM core domain.

This sequence belongs to the radical SAM superfamily. Lipoyl synthase family. [4Fe-4S] cluster is required as a cofactor.

It is found in the cytoplasm. It catalyses the reaction [[Fe-S] cluster scaffold protein carrying a second [4Fe-4S](2+) cluster] + N(6)-octanoyl-L-lysyl-[protein] + 2 oxidized [2Fe-2S]-[ferredoxin] + 2 S-adenosyl-L-methionine + 4 H(+) = [[Fe-S] cluster scaffold protein] + N(6)-[(R)-dihydrolipoyl]-L-lysyl-[protein] + 4 Fe(3+) + 2 hydrogen sulfide + 2 5'-deoxyadenosine + 2 L-methionine + 2 reduced [2Fe-2S]-[ferredoxin]. It participates in protein modification; protein lipoylation via endogenous pathway; protein N(6)-(lipoyl)lysine from octanoyl-[acyl-carrier-protein]: step 2/2. Its function is as follows. Catalyzes the radical-mediated insertion of two sulfur atoms into the C-6 and C-8 positions of the octanoyl moiety bound to the lipoyl domains of lipoate-dependent enzymes, thereby converting the octanoylated domains into lipoylated derivatives. This is Lipoyl synthase from Nocardia farcinica (strain IFM 10152).